Consider the following 159-residue polypeptide: Growth arrest and DNA damage-inducible protein GADD45 gamma (159 aa).

Residues 43-86 (VYESAKVLNVDPDNVTFCVLAADEEDEGDIALQIHFTLIQAFCC) form a homodimerization region.

Belongs to the GADD45 family. As to quaternary structure, undergoes concentration-dependent homodimerization, which is required for growth inhibititory activity and enhances interaction with PCNA. Interacts with GADD45GIP1. Interacts with PCNA.

Its function is as follows. Involved in the regulation of growth and apoptosis. Mediates activation of stress-responsive MTK1/MEKK4 MAPKKK. The chain is Growth arrest and DNA damage-inducible protein GADD45 gamma (Gadd45g) from Rattus norvegicus (Rat).